A 149-amino-acid polypeptide reads, in one-letter code: MTKVKKEECEEVPETPSKSYDELLSYLNPVAKPLAGRKLTKKLYKCVKKAIKQKNIRRGVKEVQKFINKGEKGIVVMAGDTLPIEVYCHIPVMCEDRGIPYSYVPSKSDLGAAAGSKRPTCVILIKPHEDYQEAYDECLEDVQALPLPY.

This sequence belongs to the eukaryotic ribosomal protein eL8 family. As to quaternary structure, component of the small nucleolar ribonucleoprotein particle containing H/ACA-type snoRNAs (H/ACA snoRNPs). Component of the telomerase holoenzyme complex.

It localises to the nucleus. The protein resides in the nucleolus. Its function is as follows. Required for ribosome biogenesis. Part of a complex which catalyzes pseudouridylation of rRNA. This involves the isomerization of uridine such that the ribose is subsequently attached to C5, instead of the normal N1. Pseudouridine ('psi') residues may serve to stabilize the conformation of rRNAs. This is H/ACA ribonucleoprotein complex subunit 2-like protein (nhp2) from Xenopus laevis (African clawed frog).